Reading from the N-terminus, the 113-residue chain is P antigen family member 3 (113 aa).

Residues 1 to 12 (MSGHQRTRSRSR) are compositionally biased toward basic residues. Disordered stretches follow at residues 1-61 (MSGH…EGAL) and 78-113 (SKTG…QPSV).

The protein belongs to the GAGE family.

This chain is P antigen family member 3 (PAGE3), found in Homo sapiens (Human).